Consider the following 200-residue polypeptide: ATP-dependent Clp protease proteolytic subunit 2 (200 aa).

Catalysis depends on Ser99, which acts as the Nucleophile. Residue His124 is part of the active site.

Belongs to the peptidase S14 family. In terms of assembly, fourteen ClpP subunits assemble into 2 heptameric rings which stack back to back to give a disk-like structure with a central cavity, resembling the structure of eukaryotic proteasomes.

Its subcellular location is the cytoplasm. The enzyme catalyses Hydrolysis of proteins to small peptides in the presence of ATP and magnesium. alpha-casein is the usual test substrate. In the absence of ATP, only oligopeptides shorter than five residues are hydrolyzed (such as succinyl-Leu-Tyr-|-NHMec, and Leu-Tyr-Leu-|-Tyr-Trp, in which cleavage of the -Tyr-|-Leu- and -Tyr-|-Trp bonds also occurs).. In terms of biological role, cleaves peptides in various proteins in a process that requires ATP hydrolysis. Has a chymotrypsin-like activity. Plays a major role in the degradation of misfolded proteins. The polypeptide is ATP-dependent Clp protease proteolytic subunit 2 (Treponema denticola (strain ATCC 35405 / DSM 14222 / CIP 103919 / JCM 8153 / KCTC 15104)).